Reading from the N-terminus, the 46-residue chain is Denclatoxin-B (46 aa).

3 disulfides stabilise this stretch: Cys3-Cys40, Cys4-Cys32, and Cys16-Cys26.

This sequence belongs to the plant thionin (TC 1.C.44) family.

It is found in the secreted. Functionally, thionins are small plant proteins which are toxic to animal cells. They seem to exert their toxic effect at the level of the cell membrane. Their precise function is not known. In Dendrophthora clavata (Columbian mistletoe), this protein is Denclatoxin-B.